We begin with the raw amino-acid sequence, 433 residues long: Transcription factor TCP18 (433 aa).

Disordered stretches follow at residues Q130–D163 and D247–I281. The 59-residue stretch at R148–I206 folds into the TCP domain. In terms of domain architecture, R spans K287–K304.

In terms of tissue distribution, expressed in unelongated axillary buds, and, to a lower extent, in axillary structures such as flowers and siliques.

It localises to the nucleus. Its function is as follows. Transcription factor that prevents axillary bud outgrowth and delays early axillary bud development. Indirectly required for the auxin-induced control of apical dominance. The protein is Transcription factor TCP18 of Arabidopsis thaliana (Mouse-ear cress).